We begin with the raw amino-acid sequence, 275 residues long: Large ribosomal subunit protein uL2 (275 aa).

Residues 223–275 are disordered; it reads GVVMNPVDHPHGGGEGRGKGHHPQSPWGVPAKGYKTRRGKRASDKFIVRRRNG. Residues 230–240 show a composition bias toward basic and acidic residues; sequence DHPHGGGEGRG.

This sequence belongs to the universal ribosomal protein uL2 family. Part of the 50S ribosomal subunit. Forms a bridge to the 30S subunit in the 70S ribosome.

One of the primary rRNA binding proteins. Required for association of the 30S and 50S subunits to form the 70S ribosome, for tRNA binding and peptide bond formation. It has been suggested to have peptidyltransferase activity; this is somewhat controversial. Makes several contacts with the 16S rRNA in the 70S ribosome. This is Large ribosomal subunit protein uL2 from Fervidobacterium nodosum (strain ATCC 35602 / DSM 5306 / Rt17-B1).